Here is a 464-residue protein sequence, read N- to C-terminus: tRNA-2-methylthio-N(6)-dimethylallyladenosine synthase (464 aa).

Positions 19-135 (GSYWITTFGC…LENLLGKVDL (117 aa)) constitute an MTTase N-terminal domain. Residues cysteine 28, cysteine 64, cysteine 98, cysteine 170, cysteine 174, and cysteine 177 each contribute to the [4Fe-4S] cluster site. The 239-residue stretch at 156-394 (RESSICGWVN…DLVEKTARSR (239 aa)) folds into the Radical SAM core domain. The TRAM domain maps to 396 to 464 (QRYIDNIESV…PFSLTGELSL (69 aa)).

The protein belongs to the methylthiotransferase family. MiaB subfamily. In terms of assembly, monomer. [4Fe-4S] cluster is required as a cofactor.

Its subcellular location is the cytoplasm. It catalyses the reaction N(6)-dimethylallyladenosine(37) in tRNA + (sulfur carrier)-SH + AH2 + 2 S-adenosyl-L-methionine = 2-methylsulfanyl-N(6)-dimethylallyladenosine(37) in tRNA + (sulfur carrier)-H + 5'-deoxyadenosine + L-methionine + A + S-adenosyl-L-homocysteine + 2 H(+). Catalyzes the methylthiolation of N6-(dimethylallyl)adenosine (i(6)A), leading to the formation of 2-methylthio-N6-(dimethylallyl)adenosine (ms(2)i(6)A) at position 37 in tRNAs that read codons beginning with uridine. This Prochlorococcus marinus (strain MIT 9301) protein is tRNA-2-methylthio-N(6)-dimethylallyladenosine synthase.